The following is a 432-amino-acid chain: Probable protein phosphatase 2C 33 (432 aa).

In terms of domain architecture, PPM-type phosphatase spans 27–298; sequence GGGSERPLVR…DDTTCVVVDI (272 aa). The Mn(2+) site is built by Asp-74, Gly-75, Asp-250, and Asp-289.

Belongs to the PP2C family. The cofactor is Mg(2+). Mn(2+) is required as a cofactor.

It catalyses the reaction O-phospho-L-seryl-[protein] + H2O = L-seryl-[protein] + phosphate. It carries out the reaction O-phospho-L-threonyl-[protein] + H2O = L-threonyl-[protein] + phosphate. The protein is Probable protein phosphatase 2C 33 of Oryza sativa subsp. japonica (Rice).